The following is a 332-amino-acid chain: Flotillin-like protein FloA (332 aa).

Residues 9-29 (FILIGGGIIFVVLFFHYVPFF) form a helical membrane-spanning segment.

Belongs to the flotillin-like FloA family. As to quaternary structure, homooligomerizes.

The protein localises to the cell membrane. It is found in the membrane raft. Found in functional membrane microdomains (FMM) that may be equivalent to eukaryotic membrane rafts. FMMs are highly dynamic and increase in number as cells age. Flotillins are thought to be important factors in membrane fluidity. In Phocaeicola vulgatus (strain ATCC 8482 / DSM 1447 / JCM 5826 / CCUG 4940 / NBRC 14291 / NCTC 11154) (Bacteroides vulgatus), this protein is Flotillin-like protein FloA.